The following is a 350-amino-acid chain: Outer membrane porin PhoE (350 aa).

An N-terminal signal peptide occupies residues 1 to 21 (MKKSTLALVVMGVVASASVHA).

The protein belongs to the Gram-negative porin family. In terms of assembly, homotrimer.

Its subcellular location is the cell outer membrane. In terms of biological role, uptake of inorganic phosphate, phosphorylated compounds, and some other negatively charged solutes. This Enterobacter cloacae protein is Outer membrane porin PhoE (phoE).